We begin with the raw amino-acid sequence, 61 residues long: Photosystem II reaction center protein Z (61 aa).

A run of 2 helical transmembrane segments spans residues 8–28 and 41–61; these read ALLV…VLFS and LVGS…SFFK.

This sequence belongs to the PsbZ family. As to quaternary structure, PSII is composed of 1 copy each of membrane proteins PsbA, PsbB, PsbC, PsbD, PsbE, PsbF, PsbH, PsbI, PsbJ, PsbK, PsbL, PsbM, PsbT, PsbX, PsbY, PsbZ, Psb30/Ycf12, peripheral proteins PsbO, CyanoQ (PsbQ), PsbU, PsbV and a large number of cofactors. It forms dimeric complexes.

It is found in the cellular thylakoid membrane. In terms of biological role, may control the interaction of photosystem II (PSII) cores with the light-harvesting antenna, regulates electron flow through the 2 photosystem reaction centers. PSII is a light-driven water plastoquinone oxidoreductase, using light energy to abstract electrons from H(2)O, generating a proton gradient subsequently used for ATP formation. This is Photosystem II reaction center protein Z from Synechococcus sp. (strain JA-3-3Ab) (Cyanobacteria bacterium Yellowstone A-Prime).